The sequence spans 447 residues: MNAWEVNFDGLVGLTHHYAGLSFGNEASTRHRFQVSNPRLAAKQGLLKMKKLADAGFPQAVIPPHERPFIPVLRQLGFSGSDEQVLEKVARQAPHWLSSVSSASPMWVANAATIAPSADTLDGKVHLTVANLNNKFHRSLEAPVTESLLKAIFNDEEKFSVHSALPQVALLGDEGAANHNRLGGHYGEPGMQLFVYGREEGNDTRPSRYPARQTREASEAVARLNQVNPQQVIFAQQNPDVIDQGVFHNDVIAVSNRQVLFCHQQAFARQSQLLANLRARVNGFMAIEVPATQVSVSDAVSTYLFNSQLLSRDDGSMVLVLPQECREHAGVWRYLNELLAADNPISELKVFDLRESMANGGGPACLRLRVVLTEEERRAVNPAVMMNDTLFNALNDWVDRYYRDRLTAADLADPQLLREGREALDTLTQLLDLGSVYPFQREGGGNG.

Residues 19 to 28 (AGLSFGNEAS), N110, and 137 to 138 (HR) contribute to the substrate site. E174 is a catalytic residue. R212 contributes to the substrate binding site. H248 is an active-site residue. Substrate is bound by residues D250 and N359. C365 (nucleophile) is an active-site residue.

It belongs to the succinylarginine dihydrolase family. Homodimer.

The enzyme catalyses N(2)-succinyl-L-arginine + 2 H2O + 2 H(+) = N(2)-succinyl-L-ornithine + 2 NH4(+) + CO2. Its pathway is amino-acid degradation; L-arginine degradation via AST pathway; L-glutamate and succinate from L-arginine: step 2/5. Catalyzes the hydrolysis of N(2)-succinylarginine into N(2)-succinylornithine, ammonia and CO(2). The sequence is that of N-succinylarginine dihydrolase from Escherichia coli O81 (strain ED1a).